The sequence spans 263 residues: Hydroxyethylthiazole kinase (263 aa).

Residue Met-39 coordinates substrate. Residues Lys-115 and Thr-160 each contribute to the ATP site. Gly-187 is a substrate binding site.

Belongs to the Thz kinase family. The cofactor is Mg(2+).

It catalyses the reaction 5-(2-hydroxyethyl)-4-methylthiazole + ATP = 4-methyl-5-(2-phosphooxyethyl)-thiazole + ADP + H(+). The protein operates within cofactor biosynthesis; thiamine diphosphate biosynthesis; 4-methyl-5-(2-phosphoethyl)-thiazole from 5-(2-hydroxyethyl)-4-methylthiazole: step 1/1. Catalyzes the phosphorylation of the hydroxyl group of 4-methyl-5-beta-hydroxyethylthiazole (THZ). The sequence is that of Hydroxyethylthiazole kinase from Staphylococcus haemolyticus (strain JCSC1435).